The chain runs to 247 residues: Small ribosomal subunit protein uS2 (247 aa).

It belongs to the universal ribosomal protein uS2 family.

In Pseudomonas syringae pv. tomato (strain ATCC BAA-871 / DC3000), this protein is Small ribosomal subunit protein uS2.